The following is a 261-amino-acid chain: Vacuolar protein sorting-associated protein 37D (261 aa).

The VPS37 C-terminal domain maps to 93 to 182 (AENCADKLQR…RRRERSAQPA (90 aa)). The interval 172-261 (LRRRERSAQP…RPSQPEPPHR (90 aa)) is disordered. The segment covering 181 to 195 (PAPTTAAAAAAAATA) has biased composition (low complexity). Composition is skewed to pro residues over residues 215-224 (GPPPAVPRSL) and 231-261 (PVPP…PPHR).

It belongs to the VPS37 family. In terms of assembly, component of the ESCRT-I complex (endosomal sorting complex required for transport I) which consists of TSG101, VPS28, a VPS37 protein (VPS37A to -D) and MVB12A or MVB12B in a 1:1:1:1 stoichiometry. Interacts with TSG101 and MVB12A. Component of the ESCRT-I complex (endosomal sorting complex required for transport I) which consists of TSG101, VPS28, a VPS37 protein (VPS37A to -D) and UBAP1 in a 1:1:1:1 stoichiometry.

The protein resides in the late endosome membrane. Its function is as follows. Component of the ESCRT-I complex, a regulator of vesicular trafficking process. Required for the sorting of endocytic ubiquitinated cargos into multivesicular bodies. May be involved in cell growth and differentiation. The sequence is that of Vacuolar protein sorting-associated protein 37D from Mus musculus (Mouse).